The chain runs to 30 residues: LIM and SH3 domain protein 1 (30 aa).

An N-acetylmethionine modification is found at methionine 1. Positions 5 to 30 constitute an LIM zinc-binding domain; that stretch reads CARCGKIVYPTEKVNCLDKFWHKACF.

Interacts with F-actin. Interacts with ANKRD54. Interacts with KBTBD10. In terms of processing, phosphorylated.

The protein resides in the cytoplasm. It is found in the cell cortex. It localises to the cytoskeleton. In terms of biological role, plays an important role in the regulation of dynamic actin-based, cytoskeletal activities. Agonist-dependent changes in LASP1 phosphorylation may also serve to regulate actin-associated ion transport activities, not only in the parietal cell but also in certain other F-actin-rich secretory epithelial cell types. This Sus scrofa (Pig) protein is LIM and SH3 domain protein 1 (LASP1).